A 443-amino-acid polypeptide reads, in one-letter code: Putative F-box/FBD/LRR-repeat protein At5g22670 (443 aa).

Residues 10-56 (QDSISLLPDDLLCRILSNLPTKVAVRTSVLSKRWKRFSLSVPLLEFN) enclose the F-box domain. LRR repeat units lie at residues 139 to 165 (SLRLHNVSLPDFDHVSLPRLKTMHLID), 166 to 191 (NIYPNDALLENLISSCPVLEDLNVSR), 219 to 243 (YGDIEDDSWEVVIDAPRLSYLSLRD), 275 to 300 (NFLLTRSVVRNFFTRLSSVRDMTMSG), and 325 to 353 (YAVFCNSDLEKLPNFLESCPNLKSLVLEL). The FBD domain occupies 361-412 (LLILSSSIPKCLRSSLEHVEIHTPISGAEAEMKLVKYFLENSAVLKKFTLQL).

The chain is Putative F-box/FBD/LRR-repeat protein At5g22670 from Arabidopsis thaliana (Mouse-ear cress).